Here is a 70-residue protein sequence, read N- to C-terminus: Ribosome modulation factor (70 aa).

This sequence belongs to the ribosome modulation factor family.

The protein localises to the cytoplasm. Its function is as follows. During stationary phase, converts 70S ribosomes to an inactive dimeric form (100S ribosomes). The sequence is that of Ribosome modulation factor from Marinobacter adhaerens (strain DSM 23420 / HP15).